A 660-amino-acid polypeptide reads, in one-letter code: Replication restart protein PriA (660 aa).

A Helicase ATP-binding domain is found at 145–313 (IIGSEKTNVF…KNNQIKKIIM (169 aa)). ATP is bound at residue 158–165 (GIPGSGKT). Residues 256 to 259 (DEEH) carry the DEAH box motif. Residues cysteine 370, cysteine 373, cysteine 379, cysteine 382, cysteine 397, cysteine 400, cysteine 410, and cysteine 413 each contribute to the Zn(2+) site. Residues 405–557 (KTASHCPQCE…QFYEEELDIR (153 aa)) form the Helicase C-terminal domain.

It belongs to the helicase family. PriA subfamily. Component of the replication restart primosome. Requires Zn(2+) as cofactor.

It carries out the reaction Couples ATP hydrolysis with the unwinding of duplex DNA by translocating in the 3'-5' direction.. It catalyses the reaction ATP + H2O = ADP + phosphate + H(+). In terms of biological role, initiates the restart of stalled replication forks, which reloads the replicative helicase on sites other than the origin of replication. Recognizes and binds to abandoned replication forks and remodels them to uncover a helicase loading site. Promotes assembly of the primosome at these replication forks. The protein is Replication restart protein PriA of Borreliella burgdorferi (strain ATCC 35210 / DSM 4680 / CIP 102532 / B31) (Borrelia burgdorferi).